Here is an 88-residue protein sequence, read N- to C-terminus: MHLSLARSAVLMLLLLFALGNFVVVQSGQITRDVDNGQLTDNRRNLQSKWKPVSLYMSRRGCNNSCQEHSDCESHCICTFRGCGAVNG.

The N-terminal stretch at Met-1–Ser-27 is a signal peptide. Positions Gly-28–Ser-58 are excised as a propeptide. Cystine bridges form between Cys-62/Cys-76, Cys-66/Cys-78, and Cys-72/Cys-83. Residues Glu-68 and Glu-73 each carry the 4-carboxyglutamate; partial modification. Asn-87 bears the Asparagine amide mark.

Exists in 4 different forms, depending on gamma-carboxyglutamations. Tx9a-EE does not contain gamma-carboxyglutamate, tx9a-E/gamma has one gamma-carboxyglutamate at position 73, tx9a-gamma/E has one gamma-carboxyglutamate at position 68, and tx9a-agmma/gamma has two gamma-carboxyglutamates at positions 68 and 73. In terms of tissue distribution, expressed by the venom duct. All different gamma-carboxyalted forms are mostly present in part 2, part 3 and part 4 of the venom duct. They are also found in part 1 (proximal part near the venom bulb) and part 5, but in lower quantity.

The protein resides in the secreted. Functionally, neurotoxin. In vivo, intracranial injection into mice of 10 pmol/g of the peptide induces running in circles and hyperactivity. At higher doses (50 pmol/g), the mice exhibit running and climbing symptoms for close to one hour. Between 130 and 150 pmol/g, characteristic 'spasmodic' symptomatology is elicited. A hand clap would make mice jump high and start running rapidly. When exposed to a loud hand clap, or if the cage cover were dropped, the mice lose motor control and exhibit seizure-like symptoms from which they eventually recover. At the highest doses tested (over 250 pmol/g), after the characteristic spasmodic symptomatology, lethality occurs. Injection of a similar dose range intramuscularly into Siamese fighting fish elicited no unusual symptomatology. The chain is Conotoxin tx9a from Conus textile (Cloth-of-gold cone).